The primary structure comprises 429 residues: MKSATKSKILCIHGYAESGELFSVKLRALRERMADSVDFYFPTGPIELDKAKDELNGSGFDALSTVFSSSPASHRRGWWRINEYADTKQLEPTKAFEYLASYIKEHGPFDGILGFSQGTNLAANLAALVTIPKYQEYFSQPPFRFALFFSGYFRPLLMDGAVHATKLDLPTLHLLGKYDTVLSTETSTTLVRACKDAQVLFHPAAHQIPAPHAYVEPAADFIDFFSREDWPIISKHISLIVPTKKVNTTSAQTSLNNVEHDLISKIMSRSFKGGINVVVSDLQMFNEYKRIFGPKVLSLVVTDGQEPDTYSENVHYTPNFKGALAYLEAYQNSIGRIYVIGDKKLLTLGMLCRCTKRIIAITDAEDKFISQSSAQQVSGSLPFLEHSKEWLKAKSSQIRQWTGQSRLKHMSQDNSGEPVTMKLQMWERL.

Residues Ser-116, Asp-179, and His-206 each act as charge relay system in the active site.

Belongs to the AB hydrolase 3 family.

The protein resides in the cytoplasm. Its subcellular location is the nucleus. This is an uncharacterized protein from Schizosaccharomyces pombe (strain 972 / ATCC 24843) (Fission yeast).